A 703-amino-acid polypeptide reads, in one-letter code: Meiotic coiled-coil protein 2 (703 aa).

Composition is skewed to polar residues over residues 1–19 (MQSI…SISE) and 245–258 (TNVR…STPL). 3 disordered regions span residues 1–29 (MQSI…SELN), 245–265 (TNVR…DVDL), and 284–309 (ASTN…RSSS). In terms of domain architecture, PUM-HD spans 331–686 (NPSVIPESTS…KVAYLVEKWN (356 aa)). 8 Pumilio repeats span residues 361-396 (NVII…NIVD), 397-432 (SIIS…QMGS), 433-468 (AMLG…AMMD), 469-504 (ELFL…NVMN), 509-544 (ALRG…ECIE), 545-580 (EIIF…RVID), 581-616 (ALLN…LYLK), and 625-660 (RTRQ…LVIT).

The chain is Meiotic coiled-coil protein 2 (mcp2) from Schizosaccharomyces pombe (strain 972 / ATCC 24843) (Fission yeast).